The chain runs to 250 residues: 5-oxoprolinase subunit A (250 aa).

The protein belongs to the LamB/PxpA family. Forms a complex composed of PxpA, PxpB and PxpC.

It catalyses the reaction 5-oxo-L-proline + ATP + 2 H2O = L-glutamate + ADP + phosphate + H(+). Catalyzes the cleavage of 5-oxoproline to form L-glutamate coupled to the hydrolysis of ATP to ADP and inorganic phosphate. The chain is 5-oxoprolinase subunit A from Staphylococcus haemolyticus (strain JCSC1435).